Reading from the N-terminus, the 241-residue chain is NEP1-interacting protein 2 (241 aa).

Positions 1–20 (MASSSSSSYRFQSGSYPLSS) are disordered. Residues 1-36 (MASSSSSSYRFQSGSYPLSSSPSLGNFVERIKDACH) are Lumenal, thylakoid-facing. A helical membrane pass occupies residues 37 to 57 (FLVSAVLGTIISAILTFFFAL). The Stromal portion of the chain corresponds to 58 to 76 (VGTLLGALTGALIGQETES). Residues 77-97 (GFIRGAAIGAISGAVFSIEVF) form a helical membrane-spanning segment. Residues 98-109 (ESSLDLWKSDES) are Lumenal, thylakoid-facing. The helical transmembrane segment at 110 to 130 (GFGCFLYLIDVIVSLLSGRLV) threads the bilayer. Topologically, residues 131 to 241 (RERIGPAMLS…GSCPMCRRDI (111 aa)) are stromal. The RING-type; atypical zinc-finger motif lies at 196 to 238 (CSVCLQDFQLGETVRSLPHCHHMFHLPCIDNWLLRHGSCPMCR).

The protein belongs to the RING-type zinc finger family. NIP subfamily. As to quaternary structure, interacts with RPOT2.

It is found in the plastid. It localises to the chloroplast thylakoid membrane. Its function is as follows. Intrinsic thylakoid membrane protein that fixes RPOT2 on the stromal side of the thylakoid membrane. The sequence is that of NEP1-interacting protein 2 (NIP2) from Arabidopsis thaliana (Mouse-ear cress).